Here is a 239-residue protein sequence, read N- to C-terminus: Fatty acid metabolism regulator protein (239 aa).

Positions 6 to 74 (QSPAGFAEEY…HGKPTKVNNF (69 aa)) constitute an HTH gntR-type domain. A DNA-binding region (H-T-H motif) is located at residues 34–53 (ERELSELIGVTRTTLREVLQ).

Homodimer.

Its subcellular location is the cytoplasm. In terms of biological role, multifunctional regulator of fatty acid metabolism. Represses transcription of at least eight genes required for fatty acid transport and beta-oxidation including fadA, fadB, fadD, fadL and fadE. Activates transcription of at least three genes required for unsaturated fatty acid biosynthesis: fabA, fabB and iclR, the gene encoding the transcriptional regulator of the aceBAK operon encoding the glyoxylate shunt enzymes. Binding of FadR is specifically inhibited by long chain fatty acyl-CoA compounds. The polypeptide is Fatty acid metabolism regulator protein (Salmonella typhimurium (strain LT2 / SGSC1412 / ATCC 700720)).